A 590-amino-acid chain; its full sequence is Auxin response factor 20 (590 aa).

The segment at residues 126 to 224 (FTKVLTASDT…ELRVGIRRAR (99 aa)) is a DNA-binding region (TF-B3). One can recognise a PB1 domain in the interval 495 to 576 (RTCTKVQMQG…MVKKILIYSK (82 aa)).

Belongs to the ARF family. As to quaternary structure, homodimers and heterodimers.

The protein resides in the nucleus. Auxin response factors (ARFs) are transcriptional factors that bind specifically to the DNA sequence 5'-TGTCTC-3' found in the auxin-responsive promoter elements (AuxREs). Could act as transcriptional activator or repressor. Formation of heterodimers with Aux/IAA proteins may alter their ability to modulate early auxin response genes expression. This chain is Auxin response factor 20 (ARF20), found in Arabidopsis thaliana (Mouse-ear cress).